We begin with the raw amino-acid sequence, 239 residues long: Enolase-phosphatase E1 (239 aa).

D13 and E15 together coordinate Mg(2+). Substrate is bound by residues 133–134 and K170; that span reads SS. A Mg(2+)-binding site is contributed by D196.

Belongs to the HAD-like hydrolase superfamily. MasA/MtnC family. In terms of assembly, monomer. Requires Mg(2+) as cofactor.

The protein resides in the cytoplasm. It is found in the nucleus. It carries out the reaction 5-methylsulfanyl-2,3-dioxopentyl phosphate + H2O = 1,2-dihydroxy-5-(methylsulfanyl)pent-1-en-3-one + phosphate. It functions in the pathway amino-acid biosynthesis; L-methionine biosynthesis via salvage pathway; L-methionine from S-methyl-5-thio-alpha-D-ribose 1-phosphate: step 3/6. The protein operates within amino-acid biosynthesis; L-methionine biosynthesis via salvage pathway; L-methionine from S-methyl-5-thio-alpha-D-ribose 1-phosphate: step 4/6. Bifunctional enzyme that catalyzes the enolization of 2,3-diketo-5-methylthiopentyl-1-phosphate (DK-MTP-1-P) into the intermediate 2-hydroxy-3-keto-5-methylthiopentenyl-1-phosphate (HK-MTPenyl-1-P), which is then dephosphorylated to form the acireductone 1,2-dihydroxy-3-keto-5-methylthiopentene (DHK-MTPene). The chain is Enolase-phosphatase E1 from Chaetomium globosum (strain ATCC 6205 / CBS 148.51 / DSM 1962 / NBRC 6347 / NRRL 1970) (Soil fungus).